Consider the following 463-residue polypeptide: Arginine biosynthesis bifunctional protein ArgJ, chloroplastic (463 aa).

The substrate site is built by T207, K233, T244, E331, N458, and T463. T244 functions as the Nucleophile in the catalytic mechanism.

This sequence belongs to the ArgJ family. In terms of assembly, heterodimer of an alpha and a beta chain.

It is found in the plastid. The protein localises to the chloroplast. It carries out the reaction N(2)-acetyl-L-ornithine + L-glutamate = N-acetyl-L-glutamate + L-ornithine. The catalysed reaction is L-glutamate + acetyl-CoA = N-acetyl-L-glutamate + CoA + H(+). It functions in the pathway amino-acid biosynthesis; L-arginine biosynthesis; L-ornithine and N-acetyl-L-glutamate from L-glutamate and N(2)-acetyl-L-ornithine (cyclic): step 1/1. It participates in amino-acid biosynthesis; L-arginine biosynthesis; N(2)-acetyl-L-ornithine from L-glutamate: step 1/4. Catalyzes two activities which are involved in the cyclic version of arginine biosynthesis: the synthesis of acetylglutamate from glutamate and acetyl-CoA, and of ornithine by transacetylation between acetylornithine and glutamate. The polypeptide is Arginine biosynthesis bifunctional protein ArgJ, chloroplastic (Oryza sativa subsp. japonica (Rice)).